The chain runs to 490 residues: 4-hydroxyphenylacetaldehyde synthase (490 aa).

The L-phenylalanine site is built by Pro-97, His-198, and His-313. Lys-314 carries the N6-(pyridoxal phosphate)lysine modification. Phe-343 provides a ligand contact to L-phenylalanine.

Belongs to the group II decarboxylase family. In terms of assembly, homodimer. Pyridoxal 5'-phosphate is required as a cofactor.

The enzyme catalyses L-tyrosine + O2 + H2O + H(+) = (4-hydroxyphenyl)acetaldehyde + H2O2 + NH4(+) + CO2. Catalyzes the production of 4-hydroxyphenylacetaldehyde (HPAA) directly from L-tyrosine, tyramine not being formed as an intermediate. The protein is 4-hydroxyphenylacetaldehyde synthase of Rhodiola rosea (Roseroot).